A 590-amino-acid polypeptide reads, in one-letter code: Aspartate--tRNA ligase (590 aa).

Glu-175 contributes to the L-aspartate binding site. Residues 199–202 are aspartate; the sequence is QIFK. Arg-221 is an L-aspartate binding site. Residues 221–223 and Gln-230 contribute to the ATP site; that span reads RDE. His-449 provides a ligand contact to L-aspartate. Position 483 (Glu-483) interacts with ATP. Residue Arg-490 participates in L-aspartate binding. 535 to 538 contacts ATP; that stretch reads GLDR.

It belongs to the class-II aminoacyl-tRNA synthetase family. Type 1 subfamily. As to quaternary structure, homodimer.

Its subcellular location is the cytoplasm. It catalyses the reaction tRNA(Asp) + L-aspartate + ATP = L-aspartyl-tRNA(Asp) + AMP + diphosphate. In terms of biological role, catalyzes the attachment of L-aspartate to tRNA(Asp) in a two-step reaction: L-aspartate is first activated by ATP to form Asp-AMP and then transferred to the acceptor end of tRNA(Asp). This Geobacillus kaustophilus (strain HTA426) protein is Aspartate--tRNA ligase.